The chain runs to 354 residues: Transcription factor BHLH3 (354 aa).

The interval 124–143 (VAEEETSGDKALLHGGGGSS) is disordered. The basic motif stretch occupies residues 178 to 191 (GTPSKNLMAERRRR). In terms of domain architecture, bHLH spans 178-227 (GTPSKNLMAERRRRKRLNDRLSMLRSIVPKISKMDRTSILGDTIDYVKEL). Residues 192-227 (KRLNDRLSMLRSIVPKISKMDRTSILGDTIDYVKEL) are helix-loop-helix motif.

This sequence belongs to the bHLH protein family. In terms of assembly, interacts with LAX1. Phosphorylated by MAPK3 and MAPK6.

It is found in the nucleus. The protein localises to the cytoplasm. In terms of biological role, transcription factor involved in defense responses that functions downstream of RAC1 and upstream of PAL1 and WRKY19 genes. The chain is Transcription factor BHLH3 from Oryza sativa subsp. japonica (Rice).